We begin with the raw amino-acid sequence, 284 residues long: 2-dehydro-3-deoxyphosphooctonate aldolase (284 aa).

Belongs to the KdsA family.

Its subcellular location is the cytoplasm. It catalyses the reaction D-arabinose 5-phosphate + phosphoenolpyruvate + H2O = 3-deoxy-alpha-D-manno-2-octulosonate-8-phosphate + phosphate. Its pathway is carbohydrate biosynthesis; 3-deoxy-D-manno-octulosonate biosynthesis; 3-deoxy-D-manno-octulosonate from D-ribulose 5-phosphate: step 2/3. The protein operates within bacterial outer membrane biogenesis; lipopolysaccharide biosynthesis. This chain is 2-dehydro-3-deoxyphosphooctonate aldolase, found in Enterobacter sp. (strain 638).